Reading from the N-terminus, the 461-residue chain is Photosystem II CP43 reaction center protein (461 aa).

Positions 1–2 are excised as a propeptide; sequence ME. T3 is modified (N-acetylthreonine). T3 is modified (phosphothreonine). The next 5 membrane-spanning stretches (helical) occupy residues 57-81, 122-143, 166-188, 243-263, and 279-300; these read LFEV…PHLA, LIGP…KDKN, KAMY…RIIT, TPWP…LSYS, and WFNN…ASQS. E355 contributes to the [CaMn4O5] cluster binding site. Residues 435-459 traverse the membrane as a helical segment; it reads RARAAAAGFEKGIDRLDEPVLSMRP.

Belongs to the PsbB/PsbC family. PsbC subfamily. In terms of assembly, PSII is composed of 1 copy each of membrane proteins PsbA, PsbB, PsbC, PsbD, PsbE, PsbF, PsbH, PsbI, PsbJ, PsbK, PsbL, PsbM, PsbT, PsbX, PsbY, PsbZ, Psb30/Ycf12, at least 3 peripheral proteins of the oxygen-evolving complex and a large number of cofactors. It forms dimeric complexes. The cofactor is Binds multiple chlorophylls and provides some of the ligands for the Ca-4Mn-5O cluster of the oxygen-evolving complex. It may also provide a ligand for a Cl- that is required for oxygen evolution. PSII binds additional chlorophylls, carotenoids and specific lipids..

It is found in the plastid. It localises to the chloroplast thylakoid membrane. In terms of biological role, one of the components of the core complex of photosystem II (PSII). It binds chlorophyll and helps catalyze the primary light-induced photochemical processes of PSII. PSII is a light-driven water:plastoquinone oxidoreductase, using light energy to abstract electrons from H(2)O, generating O(2) and a proton gradient subsequently used for ATP formation. The chain is Photosystem II CP43 reaction center protein from Tetradesmus obliquus (Green alga).